A 465-amino-acid chain; its full sequence is Cyclin-A1 (465 aa).

This sequence belongs to the cyclin family. Cyclin AB subfamily. As to quaternary structure, interacts with the CDK2 and the CDC2 protein kinases to form a serine/threonine kinase holoenzyme complex. The cyclin subunit imparts substrate specificity to the complex. Does not bind CDK4 and CDK5 (in vitro). The cyclin A1-CDK2 complex interacts with transcription factor E2F-1 and RB proteins. Found in a complex with CDK2, CABLES1 and CCNE1. Interacts with INCA1. Interacts with KLHDC9. In terms of processing, polyubiquitinated via 'Lys-11'-linked ubiquitin by the anaphase-promoting complex (APC/C), leading to its degradation by the proteasome. Deubiquitinated and stabilized by USP37 enables entry into S phase. Ubiquitinated during the G1 phase by the SCF(FBXO31) complex, leading to its proteasomal degradation. Very high levels in testis and very low levels in brain. Also found in myeloid leukemia cell lines.

It localises to the nucleus. Its function is as follows. May be involved in the control of the cell cycle at the G1/S (start) and G2/M (mitosis) transitions. May primarily function in the control of the germline meiotic cell cycle and additionally in the control of mitotic cell cycle in some somatic cells. The polypeptide is Cyclin-A1 (CCNA1) (Homo sapiens (Human)).